Here is a 420-residue protein sequence, read N- to C-terminus: Succinate--CoA ligase [GDP-forming] subunit beta, mitochondrial (420 aa).

One can recognise an ATP-grasp domain in the interval lysine 35 to phenylalanine 263. Residues glutamine 46, glycine 78 to glycine 80, and valine 135 each bind GTP. Positions 232 and 246 each coordinate Mg(2+). Substrate contacts are provided by residues asparagine 297 and glycine 354–methionine 356.

It belongs to the succinate/malate CoA ligase beta subunit family. GTP-specific subunit beta subfamily. In terms of assembly, heterodimer of an alpha and a beta subunit. The beta subunit determines specificity for GTP. Mg(2+) is required as a cofactor.

The protein resides in the mitochondrion. The catalysed reaction is GTP + succinate + CoA = succinyl-CoA + GDP + phosphate. It functions in the pathway carbohydrate metabolism; tricarboxylic acid cycle; succinate from succinyl-CoA (ligase route): step 1/1. Functionally, GTP-specific succinyl-CoA synthetase functions in the citric acid cycle (TCA), coupling the hydrolysis of succinyl-CoA to the synthesis of GTP and thus represents the only step of substrate-level phosphorylation in the TCA. The beta subunit provides nucleotide specificity of the enzyme and binds the substrate succinate, while the binding sites for coenzyme A and phosphate are found in the alpha subunit. In Dictyostelium discoideum (Social amoeba), this protein is Succinate--CoA ligase [GDP-forming] subunit beta, mitochondrial (scsB).